The following is a 159-amino-acid chain: ATP synthase subunit b 2 (159 aa).

A helical membrane pass occupies residues 1 to 21 (MDATFWAFIALVIFVAIVVYM).

This sequence belongs to the ATPase B chain family. As to quaternary structure, F-type ATPases have 2 components, F(1) - the catalytic core - and F(0) - the membrane proton channel. F(1) has five subunits: alpha(3), beta(3), gamma(1), delta(1), epsilon(1). F(0) has three main subunits: a(1), b(2) and c(10-14). The alpha and beta chains form an alternating ring which encloses part of the gamma chain. F(1) is attached to F(0) by a central stalk formed by the gamma and epsilon chains, while a peripheral stalk is formed by the delta and b chains.

It is found in the cell inner membrane. F(1)F(0) ATP synthase produces ATP from ADP in the presence of a proton or sodium gradient. F-type ATPases consist of two structural domains, F(1) containing the extramembraneous catalytic core and F(0) containing the membrane proton channel, linked together by a central stalk and a peripheral stalk. During catalysis, ATP synthesis in the catalytic domain of F(1) is coupled via a rotary mechanism of the central stalk subunits to proton translocation. In terms of biological role, component of the F(0) channel, it forms part of the peripheral stalk, linking F(1) to F(0). The protein is ATP synthase subunit b 2 of Brucella ovis (strain ATCC 25840 / 63/290 / NCTC 10512).